A 992-amino-acid chain; its full sequence is ATP-dependent 6-phosphofructokinase subunit alpha (992 aa).

The segment at 1-558 is N-terminal catalytic PFK domain 1; the sequence is MNNSVYGVAF…LYSNFMSTTV (558 aa). ATP-binding positions include glycine 193, 256-257, and 286-289; these read RS and GDGS. Mg(2+) is bound at residue aspartate 287. Residues 332-334, arginine 369, 376-378, glutamate 433, lysine 460, and 466-469 each bind beta-D-fructose 6-phosphate; these read SID, MGR, and HVQR. The active-site Proton acceptor is the aspartate 334. Residues 559-572 are interdomain linker; sequence NDDGSQLLPEADRL. A C-terminal regulatory PFK domain 2 region spans residues 573-992; it reads NIAIVHVGAP…AAKEDSALYV (420 aa). Beta-D-fructose 2,6-bisphosphate-binding positions include arginine 643, 700 to 704, arginine 738, 745 to 747, glutamate 805, arginine 831, 837 to 840, and arginine 929; these read TVSNN, QGG, and HVQQ.

It belongs to the phosphofructokinase type A (PFKA) family. ATP-dependent PFK group I subfamily. Eukaryotic two domain clade 'E' sub-subfamily. Heterooctamer of 4 alpha and 4 beta chains. Mg(2+) is required as a cofactor.

Its subcellular location is the cytoplasm. The enzyme catalyses beta-D-fructose 6-phosphate + ATP = beta-D-fructose 1,6-bisphosphate + ADP + H(+). It functions in the pathway carbohydrate degradation; glycolysis; D-glyceraldehyde 3-phosphate and glycerone phosphate from D-glucose: step 3/4. Allosterically activated by ADP, AMP, or fructose 2,6-bisphosphate, and allosterically inhibited by ATP or citrate. Catalyzes the phosphorylation of D-fructose 6-phosphate to fructose 1,6-bisphosphate by ATP, the first committing step of glycolysis. The protein is ATP-dependent 6-phosphofructokinase subunit alpha (PFK1) of Kluyveromyces lactis (strain ATCC 8585 / CBS 2359 / DSM 70799 / NBRC 1267 / NRRL Y-1140 / WM37) (Yeast).